The primary structure comprises 85 residues: RNA-binding protein KhpA (85 aa).

In terms of domain architecture, KH spans 32 to 85 (YLEYNLTVNPEDIGRVIGRQGRVASAIRTIVYSVRVSGPKRVRLTIEDGQQKNS).

This sequence belongs to the KhpA RNA-binding protein family. As to quaternary structure, forms a complex with KhpB.

The protein localises to the cytoplasm. Its function is as follows. A probable RNA chaperone. Forms a complex with KhpB which binds to cellular RNA and controls its expression. Plays a role in peptidoglycan (PG) homeostasis and cell length regulation. In terms of biological role, necessary for correct cell elongation. The sequence is that of RNA-binding protein KhpA from Lactiplantibacillus plantarum (strain ATCC BAA-793 / NCIMB 8826 / WCFS1) (Lactobacillus plantarum).